A 182-amino-acid chain; its full sequence is MTDVRGELLQQIKDKAVVHGKVTLSSGLEADYYVDLRRITLDGEAAPLVGQVLLDLTADLEFDAVGGLTMGADPVAASMLHAAAARGRRLDAFVVRKTAKAHGLQRRVEGPEIKGRRVVVVEDTSTTGGSPLTAVEAVREAGAEVVAVATIVDRATGAGEKIQDGAGVPYLYAYGKDELGLD.

Residues arginine 96, lysine 97, lysine 100, histidine 102, and glutamate 122–serine 130 each bind 5-phospho-alpha-D-ribose 1-diphosphate. Positions 126 and 154 each coordinate orotate.

Belongs to the purine/pyrimidine phosphoribosyltransferase family. PyrE subfamily. As to quaternary structure, homodimer. Mg(2+) is required as a cofactor.

The catalysed reaction is orotidine 5'-phosphate + diphosphate = orotate + 5-phospho-alpha-D-ribose 1-diphosphate. It participates in pyrimidine metabolism; UMP biosynthesis via de novo pathway; UMP from orotate: step 1/2. Functionally, catalyzes the transfer of a ribosyl phosphate group from 5-phosphoribose 1-diphosphate to orotate, leading to the formation of orotidine monophosphate (OMP). In Streptomyces coelicolor (strain ATCC BAA-471 / A3(2) / M145), this protein is Orotate phosphoribosyltransferase.